We begin with the raw amino-acid sequence, 521 residues long: Protein PLM2 (521 aa).

The disordered stretch occupies residues 1–63 (MSHLFPPSSP…SIGRQSSPVK (63 aa)). Polar residues predominate over residues 51–63 (PSSSIGRQSSPVK). In terms of domain architecture, FHA spans 102-156 (LAIGRKKSVCNIILPCRKNISRQHAFISYAADRNEIKLECNGTNGLSVHLPYSMQ). Residues serine 281, serine 295, serine 302, and serine 384 each carry the phosphoserine modification.

It belongs to the PLM2/TOS4 family. Phosphorylated by CDC28.

The protein resides in the nucleus. Binds to the promoters of genes with functions important for the G1/S (start) transition; primarily genes involved in DNA synthesis and repair, chromosome segregation, nuclear division and transcription. This is Protein PLM2 (PLM2) from Saccharomyces cerevisiae (strain ATCC 204508 / S288c) (Baker's yeast).